A 276-amino-acid polypeptide reads, in one-letter code: Ice-binding protein (276 aa).

The signal sequence occupies residues 1 to 24; that stretch reads MKILKRIPVLAVLLVGLMTNCSND. An Ice-binding site motif (T-A/G-X-T/N) 1 motif is present at residues 79 to 82; that stretch reads TGIT. A disulfide bridge connects residues Cys107 and Cys124. 2 short sequence motifs (ice-binding site motif (T-A/G-X-T/N)) span residues 245-248 and 263-266; these read TGIN and TAVT.

Belongs to the ice-binding protein family. In terms of assembly, monomer.

The protein resides in the secreted. Has antifreeze activity for survival in a subzero environment. Binds to the surface of ice crystals and inhibits their growth. Has high thermal hysteresis (TH) activity, which is the ability to lower the freezing point of an aqueous solution below its melting point, and thus the freezing of the cell fluid can be prevented protecting the organism from ice damage. The TH activity of this protein is 2.2 degrees Celsius at 5 uM and 2.5 degrees Celsius at 50 uM. The chain is Ice-binding protein from Flavobacterium frigoris (strain PS1).